We begin with the raw amino-acid sequence, 237 residues long: MTDHSSDKTALVLFSGGQDSATCLAWALARFARVETIGFDYGQRHLIELECRARLLDGFRAISDDWAAKLGDNHTLTIPTLAEISDTALTRDVAIAMGADGLPNTFVPGRNLIFLNFAAALAYRRGITDIVGGMCETDYSGYPDCRNDTIQALQTALSLGMARDITLHTPLMWRDKAATWQLAQDLGGDALVDLIREDSHTCYLGERGARHDWGYGCGECPACRLRAKGWIEYASGI.

An ATP-binding site is contributed by 14-24; it reads FSGGQDSATCL. Zn(2+) contacts are provided by C202, C217, C220, and C223.

It belongs to the QueC family. Requires Zn(2+) as cofactor.

The catalysed reaction is 7-carboxy-7-deazaguanine + NH4(+) + ATP = 7-cyano-7-deazaguanine + ADP + phosphate + H2O + H(+). It functions in the pathway purine metabolism; 7-cyano-7-deazaguanine biosynthesis. In terms of biological role, catalyzes the ATP-dependent conversion of 7-carboxy-7-deazaguanine (CDG) to 7-cyano-7-deazaguanine (preQ(0)). The polypeptide is 7-cyano-7-deazaguanine synthase (Rhodopseudomonas palustris (strain ATCC BAA-98 / CGA009)).